We begin with the raw amino-acid sequence, 164 residues long: Peptidyl-prolyl cis-trans isomerase A-like 4A (164 aa).

The region spanning 7–163 (FFDITVDGKP…KKITIADCGQ (157 aa)) is the PPIase cyclophilin-type domain.

It belongs to the cyclophilin-type PPIase family. PPIase A subfamily. As to expression, highly expressed in brain, ovary and mammary gland. Moderately expressed in lung, salivary gland, kidney, skin, adipose tissue, intestine and spleen. Weakly expressed in skeletal muscle, liver and stomach. Expressed in pleiomorphic and undifferentiated liposarcomas, osteosarcomas and breast carcinomas.

Its subcellular location is the cytoplasm. The catalysed reaction is [protein]-peptidylproline (omega=180) = [protein]-peptidylproline (omega=0). Its function is as follows. PPIases accelerate the folding of proteins. It catalyzes the cis-trans isomerization of proline imidic peptide bonds in oligopeptides. In Homo sapiens (Human), this protein is Peptidyl-prolyl cis-trans isomerase A-like 4A.